An 842-amino-acid polypeptide reads, in one-letter code: Alanine--tRNA ligase (842 aa).

His549, His553, Cys650, and His654 together coordinate Zn(2+).

Belongs to the class-II aminoacyl-tRNA synthetase family. The cofactor is Zn(2+).

It is found in the cytoplasm. It carries out the reaction tRNA(Ala) + L-alanine + ATP = L-alanyl-tRNA(Ala) + AMP + diphosphate. Catalyzes the attachment of alanine to tRNA(Ala) in a two-step reaction: alanine is first activated by ATP to form Ala-AMP and then transferred to the acceptor end of tRNA(Ala). Also edits incorrectly charged Ser-tRNA(Ala) and Gly-tRNA(Ala) via its editing domain. The chain is Alanine--tRNA ligase from Campylobacter jejuni subsp. jejuni serotype O:2 (strain ATCC 700819 / NCTC 11168).